The following is a 422-amino-acid chain: C-type lectin domain family 4 member M (422 aa).

Residues 1–49 (MSDSKEPRVQPLGLLEEDPTTSGIRLFPRDFQFQQTHGHKSSTGCLGHG) lie on the Cytoplasmic side of the membrane. Positions 14–15 (LL) match the Endocytosis signal motif. A helical; Signal-anchor for type II membrane protein membrane pass occupies residues 50–70 (PLVLQLLSFALLAGVLVAILV). The Extracellular portion of the chain corresponds to 71–422 (QVYKVPSSLS…KKPIACFRDE (352 aa)). A glycan (N-linked (GlcNAc...) asparagine) is linked at N92. 8 tandem repeats follow at residues 108-130 (KLQE…PEKS), 131-151 (KQQE…ELPE), 154-176 (QLQE…PEES), 177-199 (RLQE…PEKS), 200-222 (RLQE…PEKS), 223-245 (RLQE…PEKS), 246-268 (KLQE…PDQS), and 269-291 (KQQQ…CCRC). The 8 X approximate tandem repeats stretch occupies residues 108–292 (KLQEIYQELT…AFERLCCRCP (185 aa)). Disulfide bonds link C288-C418, C291-C302, C319-C412, and C391-C404. The 117-residue stretch at 297–413 (FFQGNCYFMS…CNVDNYWICK (117 aa)) folds into the C-type lectin domain. E382, N384, S386, E389, N400, and D401 together coordinate Ca(2+). The N-linked (GlcNAc...) asparagine glycan is linked to N384.

In terms of assembly, homotetramer.

It localises to the membrane. Functionally, probable pathogen-recognition receptor involved in peripheral immune surveillance in liver. May mediate the endocytosis of pathogens which are subsequently degraded in lysosomal compartments. Probably recognizes in a calcium-dependent manner high mannose N-linked oligosaccharides in a variety of pathogen antigens. Is a receptor for ICAM3, probably by binding to mannose-like carbohydrates. The protein is C-type lectin domain family 4 member M (CLEC4M) of Symphalangus syndactylus (Siamang).